The chain runs to 296 residues: GTPase Era (296 aa).

In terms of domain architecture, Era-type G spans 3-170 (KSGFVTIVGR…KELMFKYIPE (168 aa)). Positions 11-18 (GRPNVGKS) are G1. 11–18 (GRPNVGKS) provides a ligand contact to GTP. A G2 region spans residues 37-41 (QTTRN). Residues 58-61 (DTPG) form a G3 region. GTP-binding positions include 58–62 (DTPGI) and 120–123 (NKID). Residues 120–123 (NKID) are G4. The segment at 149–151 (ISA) is G5. The KH type-2 domain maps to 201-278 (LSEEVPHGIA…YIRLWVKVKE (78 aa)).

Belongs to the TRAFAC class TrmE-Era-EngA-EngB-Septin-like GTPase superfamily. Era GTPase family. As to quaternary structure, monomer.

It localises to the cytoplasm. It is found in the cell membrane. Functionally, an essential GTPase that binds both GDP and GTP, with rapid nucleotide exchange. Plays a role in 16S rRNA processing and 30S ribosomal subunit biogenesis and possibly also in cell cycle regulation and energy metabolism. The sequence is that of GTPase Era from Clostridium botulinum (strain Langeland / NCTC 10281 / Type F).